The chain runs to 196 residues: Peptidyl-tRNA hydrolase (196 aa).

Tyr17 serves as a coordination point for tRNA. The Proton acceptor role is filled by His22. TRNA contacts are provided by Phe68, Asn70, and Asn116.

This sequence belongs to the PTH family. Monomer.

The protein localises to the cytoplasm. It carries out the reaction an N-acyl-L-alpha-aminoacyl-tRNA + H2O = an N-acyl-L-amino acid + a tRNA + H(+). Hydrolyzes ribosome-free peptidyl-tRNAs (with 1 or more amino acids incorporated), which drop off the ribosome during protein synthesis, or as a result of ribosome stalling. In terms of biological role, catalyzes the release of premature peptidyl moieties from peptidyl-tRNA molecules trapped in stalled 50S ribosomal subunits, and thus maintains levels of free tRNAs and 50S ribosomes. This Yersinia pestis bv. Antiqua (strain Antiqua) protein is Peptidyl-tRNA hydrolase.